An 87-amino-acid polypeptide reads, in one-letter code: U3-theraphotoxin-Hhn1a 10 (87 aa).

Positions 1–24 (MVNMEASMFLTFAGLVLLFVVCYA) are cleaved as a signal peptide. Positions 25–52 (SESEEKEFPKEMLSSIFAVDNDFKQEER) are excised as a propeptide. 3 disulfides stabilise this stretch: C54–C67, C61–C72, and C66–C79.

The protein belongs to the neurotoxin 10 (Hwtx-1) family. 51 (Hntx-8) subfamily. Hntx-8 sub-subfamily. Expressed by the venom gland.

Its subcellular location is the secreted. Ion channel inhibitor. This is U3-theraphotoxin-Hhn1a 10 from Cyriopagopus hainanus (Chinese bird spider).